The following is a 197-amino-acid chain: Anthranilate synthase component 2 (197 aa).

One can recognise a Glutamine amidotransferase type-1 domain in the interval 5–197 (KVLVIDNIDS…LIKNFVESEY (193 aa)). 55 to 57 (GPK) lines the L-glutamine pocket. The active-site Nucleophile; for GATase activity is the cysteine 80. L-glutamine is bound by residues glutamine 84 and 130 to 131 (SL). Catalysis depends on for GATase activity residues histidine 168 and glutamate 170.

As to quaternary structure, heterotetramer consisting of two non-identical subunits: a beta subunit (TrpG) and a large alpha subunit (TrpE).

It carries out the reaction chorismate + L-glutamine = anthranilate + pyruvate + L-glutamate + H(+). The protein operates within amino-acid biosynthesis; L-tryptophan biosynthesis; L-tryptophan from chorismate: step 1/5. Its function is as follows. Part of a heterotetrameric complex that catalyzes the two-step biosynthesis of anthranilate, an intermediate in the biosynthesis of L-tryptophan. In the first step, the glutamine-binding beta subunit (TrpG) of anthranilate synthase (AS) provides the glutamine amidotransferase activity which generates ammonia as a substrate that, along with chorismate, is used in the second step, catalyzed by the large alpha subunit of AS (TrpE) to produce anthranilate. In the absence of TrpG, TrpE can synthesize anthranilate directly from chorismate and high concentrations of ammonia. The sequence is that of Anthranilate synthase component 2 (trpG) from Methanocaldococcus jannaschii (strain ATCC 43067 / DSM 2661 / JAL-1 / JCM 10045 / NBRC 100440) (Methanococcus jannaschii).